Here is a 452-residue protein sequence, read N- to C-terminus: Probable hexaprenyl pyrophosphate synthase, mitochondrial (452 aa).

3 residues coordinate isopentenyl diphosphate: Lys108, Arg111, and His204. Positions 211 and 215 each coordinate Mg(2+). Arg220 serves as a coordination point for an all-trans-polyprenyl diphosphate. Isopentenyl diphosphate is bound at residue Arg221. Residues Lys303, Thr304, Gln341, and Lys358 each contribute to the an all-trans-polyprenyl diphosphate site.

Belongs to the FPP/GGPP synthase family. Mg(2+) is required as a cofactor.

Its subcellular location is the mitochondrion. It functions in the pathway cofactor biosynthesis; ubiquinone biosynthesis. Functionally, assembly of polyisoprenoid side chains. The polyprenyl synthase of coenzyme Q biosynthesis catalyzes the formation from isopentenyl diphosphate of all trans-polyprenyl pyrophosphates generally ranging in length of between 6 and 10 isoprene units depending on the species. The sequence is that of Probable hexaprenyl pyrophosphate synthase, mitochondrial (COQ1) from Yarrowia lipolytica (strain CLIB 122 / E 150) (Yeast).